Reading from the N-terminus, the 383-residue chain is MLASYASDPLKSRGRLYKELPTSYRNEFERDRDRIIHTNAFRRLQYKTQVFINHEGDHYRNRLTHSLEVSTVARSVANTLNLSSDLAETIALAHDLGHTPFGHAGERALNECMKEYNGFSHNAQSLKILTLLEKRYAAYNGVNLTWEVLEGIVKHNGPITDEINEYIAEYNKQNDLELSTYASAEAQIAALADDISYISHDLEDSIGAKIIDFNSLAELKYIDQHVFEIKTKFKNISSSCLIYEVVRKLIHELITDLLWQTKENLNKEKITNIDEIRNLNYQIVDFTEKTNERIKETKKFLHERVYKSNKITAISLKCTKIVQGLFKVYMDDINLLPVNWKMLIDSNETYSKARIIADYIAGMTDRFAIQEYNQLCSLNFNNI.

The HD domain occupies 62–198 (RLTHSLEVST…AALADDISYI (137 aa)).

This sequence belongs to the dGTPase family. Type 2 subfamily.

This chain is Deoxyguanosinetriphosphate triphosphohydrolase-like protein, found in Rickettsia felis (strain ATCC VR-1525 / URRWXCal2) (Rickettsia azadi).